Here is a 189-residue protein sequence, read N- to C-terminus: Thermostable direct hemolysin-related (189 aa).

The signal sequence occupies residues 1–24 (MKYRYFAKKSFLFISMLAAFKTFA). A disulfide bond links Cys-175 and Cys-185.

Belongs to the TDH hemolysin family. As to quaternary structure, homodimer.

Its function is as follows. Bacterial hemolysins are exotoxins that attack blood cell membranes and cause cell rupture by mechanisms not clearly defined. In Vibrio parahaemolyticus, this protein is Thermostable direct hemolysin-related (tdh3).